The following is a 173-amino-acid chain: Mesencephalic astrocyte-derived neurotrophic factor homolog (173 aa).

Positions 1–22 (MKTAHLVVVVCFLAGALQTAVA) are cleaved as a signal peptide. Intrachain disulfides connect C28–C114, C31–C103, C61–C72, and C148–C151.

Belongs to the ARMET family.

The protein localises to the secreted. Required during the maturation of the embryonic nervous system for maintenance of neuronal and cuticular connectivity. Essential for maintenance of dopaminergic neurons and dopamine levels. In Drosophila ananassae (Fruit fly), this protein is Mesencephalic astrocyte-derived neurotrophic factor homolog.